The following is a 1368-amino-acid chain: DNA-directed RNA polymerase subunit beta (1368 aa).

It belongs to the RNA polymerase beta chain family. In terms of assembly, the RNAP catalytic core consists of 2 alpha, 1 beta, 1 beta' and 1 omega subunit. When a sigma factor is associated with the core the holoenzyme is formed, which can initiate transcription.

The enzyme catalyses RNA(n) + a ribonucleoside 5'-triphosphate = RNA(n+1) + diphosphate. Its function is as follows. DNA-dependent RNA polymerase catalyzes the transcription of DNA into RNA using the four ribonucleoside triphosphates as substrates. The sequence is that of DNA-directed RNA polymerase subunit beta from Burkholderia ambifaria (strain ATCC BAA-244 / DSM 16087 / CCUG 44356 / LMG 19182 / AMMD) (Burkholderia cepacia (strain AMMD)).